We begin with the raw amino-acid sequence, 309 residues long: Aspartate carbamoyltransferase catalytic subunit (309 aa).

Residues Arg55 and Thr56 each coordinate carbamoyl phosphate. Lys85 is a binding site for L-aspartate. 3 residues coordinate carbamoyl phosphate: Arg106, His135, and Gln138. Residues Arg168 and Arg230 each coordinate L-aspartate. Carbamoyl phosphate is bound by residues Leu268 and Pro269.

Belongs to the aspartate/ornithine carbamoyltransferase superfamily. ATCase family. As to quaternary structure, heterododecamer (2C3:3R2) of six catalytic PyrB chains organized as two trimers (C3), and six regulatory PyrI chains organized as three dimers (R2).

The catalysed reaction is carbamoyl phosphate + L-aspartate = N-carbamoyl-L-aspartate + phosphate + H(+). It participates in pyrimidine metabolism; UMP biosynthesis via de novo pathway; (S)-dihydroorotate from bicarbonate: step 2/3. In terms of biological role, catalyzes the condensation of carbamoyl phosphate and aspartate to form carbamoyl aspartate and inorganic phosphate, the committed step in the de novo pyrimidine nucleotide biosynthesis pathway. The chain is Aspartate carbamoyltransferase catalytic subunit from Vibrio vulnificus (strain CMCP6).